Reading from the N-terminus, the 293-residue chain is Probable aspartoacylase (293 aa).

H14 and E17 together coordinate Zn(2+). Substrate is bound by residues R56 and 63-64 (NR). H106 is a Zn(2+) binding site. The substrate site is built by E165 and Y276.

The protein belongs to the AspA/AstE family. Aspartoacylase subfamily. Zn(2+) is required as a cofactor.

It catalyses the reaction an N-acyl-L-aspartate + H2O = a carboxylate + L-aspartate. This is Probable aspartoacylase from Trichodesmium erythraeum (strain IMS101).